Here is a 149-residue protein sequence, read N- to C-terminus: Calmodulin (149 aa).

Ala2 is subject to N-acetylalanine. 4 EF-hand domains span residues 8-43 (EQIAEFKEAFSLFDKDGDGTITTKELGTVMRSLGQN), 44-79 (PTEAELADMINEVDADGNGTIDFPEFLTMMARKMKD), 81-116 (DSEEEILEAFKVFDKDGNGFISAAELRHIMTNLGEK), and 117-149 (LTDEEVDEMIREADIDGDGQINYEEFVKMMMSK). Asp21, Asp23, Asp25, Thr27, Glu32, Asp57, Asp59, Asn61, Thr63, Glu68, Asp94, Asp96, Asn98, and Glu105 together coordinate Ca(2+). Lys116 carries the N6,N6,N6-trimethyllysine modification. Asp130, Asp132, Asp134, Gln136, and Glu141 together coordinate Ca(2+).

It belongs to the calmodulin family.

In terms of biological role, calmodulin mediates the control of a large number of enzymes, ion channels and other proteins by Ca(2+). Among the enzymes to be stimulated by the calmodulin-Ca(2+) complex are a number of protein kinases and phosphatases. The protein is Calmodulin (cam) of Saccharina japonica (Sweet kelp).